A 189-amino-acid chain; its full sequence is Potassium-transporting ATPase KdpC subunit (189 aa).

Residues 5–25 (LLPALTMLLVFTVITGIVYPL) form a helical membrane-spanning segment.

It belongs to the KdpC family. The system is composed of three essential subunits: KdpA, KdpB and KdpC.

The protein resides in the cell membrane. In terms of biological role, part of the high-affinity ATP-driven potassium transport (or Kdp) system, which catalyzes the hydrolysis of ATP coupled with the electrogenic transport of potassium into the cytoplasm. This subunit acts as a catalytic chaperone that increases the ATP-binding affinity of the ATP-hydrolyzing subunit KdpB by the formation of a transient KdpB/KdpC/ATP ternary complex. This is Potassium-transporting ATPase KdpC subunit from Mycobacterium bovis (strain ATCC BAA-935 / AF2122/97).